A 300-amino-acid polypeptide reads, in one-letter code: 17-beta-hydroxysteroid dehydrogenase 13 (300 aa).

The first 19 residues, 1–19 (MNIILEILLLLITIIYSYL), serve as a signal peptide directing secretion. A Phosphoserine modification is found at S33. 40–67 (LITGAGHGIGRQTTYEFAKRQSILVLWD) contributes to the NAD(+) binding site. Residue S172 coordinates substrate. Y185 acts as the Proton acceptor in catalysis. An NAD(+)-binding site is contributed by K189.

It belongs to the short-chain dehydrogenases/reductases (SDR) family. Highly expressed in the liver. Also detected in ovary, bone marrow, kidney, brain, lung, skeletal muscle, bladder and testis.

It is found in the lipid droplet. It localises to the endoplasmic reticulum. Its subcellular location is the cytoplasm. It carries out the reaction 17beta-estradiol + NAD(+) = estrone + NADH + H(+). The catalysed reaction is all-trans-retinol + NAD(+) = all-trans-retinal + NADH + H(+). It catalyses the reaction all-trans-retinal + NAD(+) + H2O = all-trans-retinoate + NADH + 2 H(+). In terms of biological role, plays a pivotal role in hepatic lipid metabolism. In vitro, it catalyzes the oxidation of a variety of lipid substrates, including 17beta-estradiol, retinol, retinal, and leukotriene B4. Functionally, has retinol/retinal dehydrogenase activity in vitro. Its function is as follows. Does not have retinol/retinal dehydrogenase activity in vitro. The sequence is that of 17-beta-hydroxysteroid dehydrogenase 13 from Homo sapiens (Human).